The following is a 292-amino-acid chain: Undecaprenyl-diphosphatase 2 (292 aa).

5 consecutive transmembrane segments (helical) span residues 89–109 (WLVILGTLPIGLLGVTLQDAI), 118–138 (LIATTLIVLGLILGGADWYAS), 203–223 (FLLAMPAVLASGVFELRSIGG), 232–252 (PTILATFVAFVTGYAAIAWFL), and 263–283 (FVLYRVGLGLLLFSLLVGGAL).

Belongs to the UppP family.

It is found in the cell membrane. It carries out the reaction di-trans,octa-cis-undecaprenyl diphosphate + H2O = di-trans,octa-cis-undecaprenyl phosphate + phosphate + H(+). Its function is as follows. Catalyzes the dephosphorylation of undecaprenyl diphosphate (UPP). Confers resistance to bacitracin. In Frankia casuarinae (strain DSM 45818 / CECT 9043 / HFP020203 / CcI3), this protein is Undecaprenyl-diphosphatase 2.